The chain runs to 81 residues: MADEAIKNGVLDILADLTGSDDVKTNLDLNLFETGLLDSMGTVQLLLELQSQFGVEAPVSEFDRSQWDTPNKIIAKVEQAQ.

One can recognise a Carrier domain in the interval 1 to 81 (MADEAIKNGV…KIIAKVEQAQ (81 aa)). Ser39 is modified (O-(pantetheine 4'-phosphoryl)serine).

The protein belongs to the DltC family. Post-translationally, 4'-phosphopantetheine is transferred from CoA to a specific serine of apo-DCP.

The protein localises to the cytoplasm. It functions in the pathway cell wall biogenesis; lipoteichoic acid biosynthesis. Functionally, carrier protein involved in the D-alanylation of lipoteichoic acid (LTA). The loading of thioester-linked D-alanine onto DltC is catalyzed by D-alanine--D-alanyl carrier protein ligase DltA. The DltC-carried D-alanyl group is further transferred to cell membrane phosphatidylglycerol (PG) by forming an ester bond, probably catalyzed by DltD. D-alanylation of LTA plays an important role in modulating the properties of the cell wall in Gram-positive bacteria, influencing the net charge of the cell wall. This is D-alanyl carrier protein from Lacticaseibacillus casei (strain BL23) (Lactobacillus casei).